The following is a 399-amino-acid chain: Glutamine synthetase 1, mitochondrial (399 aa).

The N-terminal 27 residues, 1–27, are a transit peptide targeting the mitochondrion; it reads MALRVAGLFLKKELVAPATQQLRLLRT. Positions 62-143 constitute a GS beta-grasp domain; the sequence is VQATYLWIDG…VLCDTYSADG (82 aa). Residues 150–399 enclose the GS catalytic domain; sequence KRAAFQAAID…AIVRTCLLNE (250 aa).

The protein belongs to the glutamine synthetase family. As to quaternary structure, homooctamer.

It is found in the mitochondrion. It carries out the reaction L-glutamate + NH4(+) + ATP = L-glutamine + ADP + phosphate + H(+). The chain is Glutamine synthetase 1, mitochondrial (Gs1) from Drosophila melanogaster (Fruit fly).